The following is a 196-amino-acid chain: GTP cyclohydrolase 1 (196 aa).

The Zn(2+) site is built by C86, H89, and C158.

This sequence belongs to the GTP cyclohydrolase I family. Toroid-shaped homodecamer, composed of two pentamers of five dimers.

It carries out the reaction GTP + H2O = 7,8-dihydroneopterin 3'-triphosphate + formate + H(+). It functions in the pathway cofactor biosynthesis; 7,8-dihydroneopterin triphosphate biosynthesis; 7,8-dihydroneopterin triphosphate from GTP: step 1/1. In Clostridium botulinum (strain Langeland / NCTC 10281 / Type F), this protein is GTP cyclohydrolase 1.